The primary structure comprises 829 residues: Translation initiation factor IF-2 (829 aa).

Residues 128-137 are compositionally biased toward basic and acidic residues; it reads QNAEEEKVEA. Residues 128 to 157 are disordered; that stretch reads QNAEEEKVEASAKTVQNNEDIQPQTSKKKE. The span at 140–152 shows a compositional bias: polar residues; the sequence is KTVQNNEDIQPQT. Positions 327-497 constitute a tr-type G domain; it reads TRAPVVTVMG…LLIAEMQDLK (171 aa). A G1 region spans residues 336–343; sequence GHVDHGKT. 336 to 343 is a GTP binding site; sequence GHVDHGKT. The interval 361–365 is G2; sequence GITQH. Residues 383 to 386 form a G3 region; it reads DTPG. GTP-binding positions include 383-387 and 437-440; these read DTPGH and NKID. A G4 region spans residues 437–440; it reads NKID. The segment at 473–475 is G5; that stretch reads SAL.

The protein belongs to the TRAFAC class translation factor GTPase superfamily. Classic translation factor GTPase family. IF-2 subfamily.

The protein resides in the cytoplasm. In terms of biological role, one of the essential components for the initiation of protein synthesis. Protects formylmethionyl-tRNA from spontaneous hydrolysis and promotes its binding to the 30S ribosomal subunits. Also involved in the hydrolysis of GTP during the formation of the 70S ribosomal complex. This Rickettsia felis (strain ATCC VR-1525 / URRWXCal2) (Rickettsia azadi) protein is Translation initiation factor IF-2.